Reading from the N-terminus, the 741-residue chain is Condensin complex subunit 2 (741 aa).

The tract at residues Met-1–Arg-67 is disordered. Ser-15, Ser-25, and Ser-28 each carry phosphoserine. A Phosphothreonine modification is found at Thr-49. A phosphoserine mark is found at Ser-70, Ser-78, Ser-81, Ser-87, Ser-89, Ser-92, Ser-96, Ser-201, and Ser-233. A compositionally biased stretch (acidic residues) spans Cys-361 to Asp-377. Positions Cys-361–Ala-383 are disordered. Ser-432 bears the Phosphoserine mark. Positions Phe-447 to Lys-467 are disordered. Lys-488 is covalently cross-linked (Glycyl lysine isopeptide (Lys-Gly) (interchain with G-Cter in SUMO2)). Residue Ser-496 is modified to Phosphoserine. Phosphothreonine is present on residues Thr-598 and Thr-605. N6-acetyllysine is present on Lys-637.

This sequence belongs to the CND2 (condensin subunit 2) family. As to quaternary structure, component of the condensin complex, which contains the SMC2 and SMC4 heterodimer, and three non SMC subunits that probably regulate the complex: NCAPH/BRRN1, NCAPD2/CAPD2 and NCAPG. Phosphorylated by CDK1. Its phosphorylation, as well as that of NCAPD2 and NCAPG subunits, activates the condensin complex and is required for chromosome condensation. In terms of tissue distribution, widely expressed at low level. Expressed in proliferating cells.

The protein resides in the nucleus. It localises to the cytoplasm. It is found in the chromosome. Its function is as follows. Regulatory subunit of the condensin complex, a complex required for conversion of interphase chromatin into mitotic-like condense chromosomes. The condensin complex probably introduces positive supercoils into relaxed DNA in the presence of type I topoisomerases and converts nicked DNA into positive knotted forms in the presence of type II topoisomerases. Early in neurogenesis, may play an essential role to ensure accurate mitotic chromosome condensation in neuron stem cells, ultimately affecting neuron pool and cortex size. The polypeptide is Condensin complex subunit 2 (Homo sapiens (Human)).